We begin with the raw amino-acid sequence, 302 residues long: GTPase Era (302 aa).

Residues K4–E171 enclose the Era-type G domain. The segment at G12–S19 is G1. G12 to S19 is a GTP binding site. A G2 region spans residues Q38 to N42. The interval D59–G62 is G3. GTP is bound by residues D59–I63 and N121–D124. The segment at N121–D124 is G4. Residues I150–A152 are G5. The region spanning L202 to K280 is the KH type-2 domain.

This sequence belongs to the TRAFAC class TrmE-Era-EngA-EngB-Septin-like GTPase superfamily. Era GTPase family. As to quaternary structure, monomer.

The protein localises to the cytoplasm. It is found in the cell membrane. An essential GTPase that binds both GDP and GTP, with rapid nucleotide exchange. Plays a role in 16S rRNA processing and 30S ribosomal subunit biogenesis and possibly also in cell cycle regulation and energy metabolism. The polypeptide is GTPase Era (Thermoanaerobacter pseudethanolicus (strain ATCC 33223 / 39E) (Clostridium thermohydrosulfuricum)).